The following is a 583-amino-acid chain: Aspartate--tRNA(Asp/Asn) ligase (583 aa).

Glu-171 is an L-aspartate binding site. The tract at residues 195 to 198 is aspartate; the sequence is QLFK. Arg-217 contacts L-aspartate. Residues 217–219 and Gln-226 contribute to the ATP site; that span reads RDE. His-443 serves as a coordination point for L-aspartate. Glu-476 provides a ligand contact to ATP. Position 483 (Arg-483) interacts with L-aspartate. 528 to 531 is an ATP binding site; that stretch reads GLDR.

The protein belongs to the class-II aminoacyl-tRNA synthetase family. Type 1 subfamily. Homodimer.

The protein localises to the cytoplasm. It carries out the reaction tRNA(Asx) + L-aspartate + ATP = L-aspartyl-tRNA(Asx) + AMP + diphosphate. Aspartyl-tRNA synthetase with relaxed tRNA specificity since it is able to aspartylate not only its cognate tRNA(Asp) but also tRNA(Asn). Reaction proceeds in two steps: L-aspartate is first activated by ATP to form Asp-AMP and then transferred to the acceptor end of tRNA(Asp/Asn). The polypeptide is Aspartate--tRNA(Asp/Asn) ligase (Ruthia magnifica subsp. Calyptogena magnifica).